A 207-amino-acid polypeptide reads, in one-letter code: N-(5'-phosphoribosyl)anthranilate isomerase (207 aa).

It belongs to the TrpF family.

The catalysed reaction is N-(5-phospho-beta-D-ribosyl)anthranilate = 1-(2-carboxyphenylamino)-1-deoxy-D-ribulose 5-phosphate. The protein operates within amino-acid biosynthesis; L-tryptophan biosynthesis; L-tryptophan from chorismate: step 3/5. The protein is N-(5'-phosphoribosyl)anthranilate isomerase of Stutzerimonas stutzeri (strain A1501) (Pseudomonas stutzeri).